A 338-amino-acid polypeptide reads, in one-letter code: Holliday junction branch migration complex subunit RuvB (338 aa).

A large ATPase domain (RuvB-L) region spans residues 1 to 181 (MTTRTISPEK…FGVISRLEFY (181 aa)). ATP-binding positions include L20, R21, G62, K65, T66, T67, 128–130 (EDF), R171, Y181, and R218. Mg(2+) is bound at residue T66. Positions 182–252 (TDAELSTIVT…VVDESLKLLE (71 aa)) are small ATPAse domain (RuvB-S). The interval 255 to 338 (EKGFDQMDRT…APAPGQGALF (84 aa)) is head domain (RuvB-H). Positions 291, 310, and 315 each coordinate DNA.

The protein belongs to the RuvB family. As to quaternary structure, homohexamer. Forms an RuvA(8)-RuvB(12)-Holliday junction (HJ) complex. HJ DNA is sandwiched between 2 RuvA tetramers; dsDNA enters through RuvA and exits via RuvB. An RuvB hexamer assembles on each DNA strand where it exits the tetramer. Each RuvB hexamer is contacted by two RuvA subunits (via domain III) on 2 adjacent RuvB subunits; this complex drives branch migration. In the full resolvosome a probable DNA-RuvA(4)-RuvB(12)-RuvC(2) complex forms which resolves the HJ.

It localises to the cytoplasm. It catalyses the reaction ATP + H2O = ADP + phosphate + H(+). Its function is as follows. The RuvA-RuvB-RuvC complex processes Holliday junction (HJ) DNA during genetic recombination and DNA repair, while the RuvA-RuvB complex plays an important role in the rescue of blocked DNA replication forks via replication fork reversal (RFR). RuvA specifically binds to HJ cruciform DNA, conferring on it an open structure. The RuvB hexamer acts as an ATP-dependent pump, pulling dsDNA into and through the RuvAB complex. RuvB forms 2 homohexamers on either side of HJ DNA bound by 1 or 2 RuvA tetramers; 4 subunits per hexamer contact DNA at a time. Coordinated motions by a converter formed by DNA-disengaged RuvB subunits stimulates ATP hydrolysis and nucleotide exchange. Immobilization of the converter enables RuvB to convert the ATP-contained energy into a lever motion, pulling 2 nucleotides of DNA out of the RuvA tetramer per ATP hydrolyzed, thus driving DNA branch migration. The RuvB motors rotate together with the DNA substrate, which together with the progressing nucleotide cycle form the mechanistic basis for DNA recombination by continuous HJ branch migration. Branch migration allows RuvC to scan DNA until it finds its consensus sequence, where it cleaves and resolves cruciform DNA. This Geobacter sulfurreducens (strain ATCC 51573 / DSM 12127 / PCA) protein is Holliday junction branch migration complex subunit RuvB.